The following is a 364-amino-acid chain: Chaperone protein DnaJ (364 aa).

Residues 5–71 form the J domain; it reads DYYEILGVAK…QKRQAYDQFG (67 aa). Residues 127-205 form a CR-type zinc finger; that stretch reads GSTVKIRIPK…CRGQGLVRKQ (79 aa). Residues Cys-140, Cys-143, Cys-157, Cys-160, Cys-179, Cys-182, Cys-193, and Cys-196 each coordinate Zn(2+). 4 CXXCXGXG motif repeats span residues 140–147, 157–164, 179–186, and 193–200; these read CDTCSGIG, CSICSGVG, CGTCSGTG, and CGTCRGQG.

The protein belongs to the DnaJ family. Homodimer. It depends on Zn(2+) as a cofactor.

Its subcellular location is the cytoplasm. Participates actively in the response to hyperosmotic and heat shock by preventing the aggregation of stress-denatured proteins and by disaggregating proteins, also in an autonomous, DnaK-independent fashion. Unfolded proteins bind initially to DnaJ; upon interaction with the DnaJ-bound protein, DnaK hydrolyzes its bound ATP, resulting in the formation of a stable complex. GrpE releases ADP from DnaK; ATP binding to DnaK triggers the release of the substrate protein, thus completing the reaction cycle. Several rounds of ATP-dependent interactions between DnaJ, DnaK and GrpE are required for fully efficient folding. Also involved, together with DnaK and GrpE, in the DNA replication of plasmids through activation of initiation proteins. In Ruthia magnifica subsp. Calyptogena magnifica, this protein is Chaperone protein DnaJ.